Here is a 173-residue protein sequence, read N- to C-terminus: Skp-like protein (173 aa).

Positions 1–19 (MKKFLLLSLMSLASSTVFA) are cleaved as a signal peptide.

It belongs to the Skp family.

This Chlamydia muridarum (strain MoPn / Nigg) protein is Skp-like protein.